The sequence spans 117 residues: Large ribosomal subunit protein uL18 (117 aa).

Belongs to the universal ribosomal protein uL18 family. In terms of assembly, part of the 50S ribosomal subunit; part of the 5S rRNA/L5/L18/L25 subcomplex. Contacts the 5S and 23S rRNAs.

This is one of the proteins that bind and probably mediate the attachment of the 5S RNA into the large ribosomal subunit, where it forms part of the central protuberance. This is Large ribosomal subunit protein uL18 from Edwardsiella ictaluri (strain 93-146).